We begin with the raw amino-acid sequence, 366 residues long: UDP-GlcNAc:ribostamycin N-acetylglucosaminyltransferase (366 aa).

Residues 342–352 (AAGAGPAVPAG) show a composition bias toward low complexity. Positions 342–366 (AAGAGPAVPAGAGEGRGGREEEHGG) are disordered. A compositionally biased stretch (basic and acidic residues) spans 357–366 (RGGREEEHGG).

It belongs to the glycosyltransferase group 1 family. Glycosyltransferase 4 subfamily. The cofactor is a divalent metal cation.

The enzyme catalyses ribostamycin + UDP-N-acetyl-alpha-D-glucosamine = 2'''-acetyl-6'''-hydroxyneomycin C + UDP + H(+). Its pathway is antibiotic biosynthesis; neomycin biosynthesis. Glycosyltransferase involved in the biosynthesis of neomycin by mediating glycosylation of ribostamycin with UDP-GlcNAc as a sugar donor to generate 2'''-acetyl-6'''-hydroxyneomycin C. The sequence is that of UDP-GlcNAc:ribostamycin N-acetylglucosaminyltransferase (neoK) from Streptomyces fradiae (Streptomyces roseoflavus).